The sequence spans 424 residues: Phosphoprotein associated with glycosphingolipid-enriched microdomains 1 (424 aa).

Residues 1–17 (MGPAGSALSSGQMQMQM) are Extracellular-facing. The chain crosses the membrane as a helical; Signal-anchor for type III membrane protein span at residues 18-38 (VLWGSLAAVAMFFLITFLILL). Residues cysteine 39 and cysteine 42 are each lipidated (S-palmitoyl cysteine). Over 39 to 424 (CSSCDRDKKP…LQQGRDVTRL (386 aa)) the chain is Cytoplasmic. A phosphoserine mark is found at serine 52 and serine 63. Tyrosine 107 is subject to Phosphotyrosine; by LYN. A Phosphoserine modification is found at serine 157. A phosphotyrosine mark is found at tyrosine 165, tyrosine 183, and tyrosine 224. The segment at 194-347 (DKSQGGKSKS…GPPQRSSSSC (154 aa)) is disordered. Positions 215–230 (AEGKADFAEYASVDRN) are enriched in basic and acidic residues. Position 226 is a phosphoserine (serine 226). The span at 236 to 247 (STNAESILGTSS) shows a compositional bias: polar residues. Tyrosine 314 carries the phosphotyrosine; by FYN and LYN modification. The interaction with CSK stretch occupies residues 314 to 317 (YSSV). Residues 331–347 (STCQCPQGPPQRSSSSC) are compositionally biased toward polar residues. Serine 346 is subject to Phosphoserine. Residues tyrosine 351, tyrosine 381, and tyrosine 409 each carry the phosphotyrosine modification. Positions 361–424 (PNSISMLPPA…LQQGRDVTRL (64 aa)) are disordered. The interaction with NHERF1 stretch occupies residues 422 to 424 (TRL).

As to quaternary structure, interacts with NHERF1/EBP50. In resting T-cells, part of a PAG1-NHERF1-MSN complex which is disrupted upon TCR activation. When phosphorylated, interacts with CSK. Identified in a complex with LYN and STAT3. Interacts with LYN. Post-translationally, palmitoylated. In terms of processing, phosphorylated by FYN on Tyr-314 in resting T-cells; which promotes interaction with CSK. Dephosphorylated by PTPRC/CD45 upon TCR activation; which leads to CSK dissociation. May also be dephosphorylated by PTPN11. Hyperphosphorylated in mast cells upon FCER1 activation. Phosphorylated by LYN in response to EPO. As to expression, ubiquitously expressed, with highest levels in developing brain, lung, thymus, spleen and testis. Present in mast cells.

It is found in the cell membrane. In terms of biological role, negatively regulates TCR (T-cell antigen receptor)-mediated signaling in T-cells and FCER1 (high affinity immunoglobulin epsilon receptor)-mediated signaling in mast cells. Promotes CSK activation and recruitment to lipid rafts, which results in LCK inhibition. Inhibits immunological synapse formation by preventing dynamic arrangement of lipid raft proteins. May be involved in cell adhesion signaling. This chain is Phosphoprotein associated with glycosphingolipid-enriched microdomains 1 (Pag1), found in Rattus norvegicus (Rat).